The chain runs to 717 residues: Asp/Glu-specific dipeptidyl-peptidase (717 aa).

A signal peptide spans Met-1 to Ala-21. Catalysis depends on charge relay system residues His-85, Asp-226, and Ser-652.

Belongs to the peptidase S46 family.

It localises to the secreted. The protein resides in the cell surface. With respect to regulation, enzyme activity is completely blocked by diisopropyl-fluorophosphates, moderately by phenylmethylsulfonyl fluoride (PMSF) and 4-(2-methyl)benzenesulfonyl fluoride, and slightly by pepstatin in vitro. In terms of biological role, catalyzes the removal of dipeptides from the N-terminus of oligopeptides. Shows a strict specificity for acidic residues (Asp or Glu) in the P1 position, and has a hydrophobic residue preference at the P2 position. Is likely involved in amino acid metabolism and bacterial growth/survival of asaccharolytic P.endodontalis, that utilizes amino acids from extracellular proteinaceous nutrients as energy and carbon sources. The chain is Asp/Glu-specific dipeptidyl-peptidase (dpp11) from Porphyromonas endodontalis (strain ATCC 35406 / DSM 24491 / JCM 8526 / CCUG 16442 / BCRC 14492 / NCTC 13058 / HG 370) (Bacteroides endodontalis).